A 58-amino-acid chain; its full sequence is Mitochondrial import receptor subunit TOM7 homolog (58 aa).

The Cytoplasmic portion of the chain corresponds to 1–16; it reads MKLSPATKSFIGKTVD. The chain crosses the membrane as a helical span at residues 17-35; that stretch reads ISTFAIQWGFVPFVVYLGF. Residues 36-58 are Mitochondrial intermembrane-facing; it reads KKGAEPMPNGQILPLSAMSLLWG.

It belongs to the Tom7 family. In terms of assembly, forms part of the preprotein translocase complex of the outer mitochondrial membrane (TOM complex).

It localises to the mitochondrion outer membrane. This is Mitochondrial import receptor subunit TOM7 homolog (tomm-7) from Caenorhabditis elegans.